A 186-amino-acid chain; its full sequence is Acireductone dioxygenase (186 aa).

4 residues coordinate Fe(2+): histidine 89, histidine 91, glutamate 95, and histidine 134. Ni(2+)-binding residues include histidine 89, histidine 91, glutamate 95, and histidine 134.

Belongs to the acireductone dioxygenase (ARD) family. Fe(2+) is required as a cofactor. Requires Ni(2+) as cofactor.

The protein localises to the cytoplasm. The protein resides in the nucleus. It catalyses the reaction 1,2-dihydroxy-5-(methylsulfanyl)pent-1-en-3-one + O2 = 4-methylsulfanyl-2-oxobutanoate + formate + 2 H(+). The enzyme catalyses 1,2-dihydroxy-5-(methylsulfanyl)pent-1-en-3-one + O2 = 3-(methylsulfanyl)propanoate + CO + formate + 2 H(+). It participates in amino-acid biosynthesis; L-methionine biosynthesis via salvage pathway; L-methionine from S-methyl-5-thio-alpha-D-ribose 1-phosphate: step 5/6. Functionally, catalyzes 2 different reactions between oxygen and the acireductone 1,2-dihydroxy-3-keto-5-methylthiopentene (DHK-MTPene) depending upon the metal bound in the active site. Fe-containing acireductone dioxygenase (Fe-ARD) produces formate and 2-keto-4-methylthiobutyrate (KMTB), the alpha-ketoacid precursor of methionine in the methionine recycle pathway. Ni-containing acireductone dioxygenase (Ni-ARD) produces methylthiopropionate, carbon monoxide and formate, and does not lie on the methionine recycle pathway. This chain is Acireductone dioxygenase, found in Drosophila melanogaster (Fruit fly).